Consider the following 37-residue polypeptide: Cytochrome b6-f complex subunit 5 (37 aa).

A helical transmembrane segment spans residues 5–25 (LPSGIVLGLIPITLAGLFVTA).

The protein belongs to the PetG family. As to quaternary structure, the 4 large subunits of the cytochrome b6-f complex are cytochrome b6, subunit IV (17 kDa polypeptide, PetD), cytochrome f and the Rieske protein, while the 4 small subunits are PetG, PetL, PetM and PetN. The complex functions as a dimer.

It localises to the plastid. Its subcellular location is the chloroplast thylakoid membrane. Its function is as follows. Component of the cytochrome b6-f complex, which mediates electron transfer between photosystem II (PSII) and photosystem I (PSI), cyclic electron flow around PSI, and state transitions. PetG is required for either the stability or assembly of the cytochrome b6-f complex. In Pinus thunbergii (Japanese black pine), this protein is Cytochrome b6-f complex subunit 5.